The primary structure comprises 517 residues: Succinyl-CoA:3-ketoacid coenzyme A transferase 2, mitochondrial (517 aa).

A mitochondrion-targeting transit peptide spans 1 to 39 (MAALRLLASVLGRGVPAGGSGLALSQGCARCFATSPRLR). The active-site 5-glutamyl coenzyme A thioester intermediate is Glu-341.

This sequence belongs to the 3-oxoacid CoA-transferase family. Homodimer. Testis specific.

The protein resides in the mitochondrion. The enzyme catalyses a 3-oxo acid + succinyl-CoA = a 3-oxoacyl-CoA + succinate. The protein operates within ketone metabolism; succinyl-CoA degradation; acetoacetyl-CoA from succinyl-CoA: step 1/1. In terms of biological role, key enzyme for ketone body catabolism. Transfers the CoA moiety from succinate to acetoacetate. Formation of the enzyme-CoA intermediate proceeds via an unstable anhydride species formed between the carboxylate groups of the enzyme and substrate. In Homo sapiens (Human), this protein is Succinyl-CoA:3-ketoacid coenzyme A transferase 2, mitochondrial (OXCT2).